Consider the following 474-residue polypeptide: Aspartyl/glutamyl-tRNA(Asn/Gln) amidotransferase subunit B (474 aa).

Belongs to the GatB/GatE family. GatB subfamily. As to quaternary structure, heterotrimer of A, B and C subunits.

It catalyses the reaction L-glutamyl-tRNA(Gln) + L-glutamine + ATP + H2O = L-glutaminyl-tRNA(Gln) + L-glutamate + ADP + phosphate + H(+). The enzyme catalyses L-aspartyl-tRNA(Asn) + L-glutamine + ATP + H2O = L-asparaginyl-tRNA(Asn) + L-glutamate + ADP + phosphate + 2 H(+). Functionally, allows the formation of correctly charged Asn-tRNA(Asn) or Gln-tRNA(Gln) through the transamidation of misacylated Asp-tRNA(Asn) or Glu-tRNA(Gln) in organisms which lack either or both of asparaginyl-tRNA or glutaminyl-tRNA synthetases. The reaction takes place in the presence of glutamine and ATP through an activated phospho-Asp-tRNA(Asn) or phospho-Glu-tRNA(Gln). The protein is Aspartyl/glutamyl-tRNA(Asn/Gln) amidotransferase subunit B of Helicobacter hepaticus (strain ATCC 51449 / 3B1).